Here is a 336-residue protein sequence, read N- to C-terminus: Dihydroorotate dehydrogenase (quinone) (336 aa).

Residues 62–66 (AGLDK) and threonine 86 contribute to the FMN site. A substrate-binding site is contributed by lysine 66. 111 to 115 (NRMGF) serves as a coordination point for substrate. FMN is bound by residues asparagine 139 and asparagine 172. Asparagine 172 is a binding site for substrate. Catalysis depends on serine 175, which acts as the Nucleophile. Residue asparagine 177 coordinates substrate. 2 residues coordinate FMN: lysine 217 and threonine 245. 246–247 (NT) lines the substrate pocket. FMN is bound by residues glycine 268, glycine 297, and 318–319 (YS).

The protein belongs to the dihydroorotate dehydrogenase family. Type 2 subfamily. In terms of assembly, monomer. It depends on FMN as a cofactor.

It is found in the cell membrane. It catalyses the reaction (S)-dihydroorotate + a quinone = orotate + a quinol. It participates in pyrimidine metabolism; UMP biosynthesis via de novo pathway; orotate from (S)-dihydroorotate (quinone route): step 1/1. In terms of biological role, catalyzes the conversion of dihydroorotate to orotate with quinone as electron acceptor. This chain is Dihydroorotate dehydrogenase (quinone), found in Aeromonas salmonicida (strain A449).